Reading from the N-terminus, the 195-residue chain is Imidazoleglycerol-phosphate dehydratase (195 aa).

This sequence belongs to the imidazoleglycerol-phosphate dehydratase family.

It is found in the cytoplasm. The enzyme catalyses D-erythro-1-(imidazol-4-yl)glycerol 3-phosphate = 3-(imidazol-4-yl)-2-oxopropyl phosphate + H2O. It functions in the pathway amino-acid biosynthesis; L-histidine biosynthesis; L-histidine from 5-phospho-alpha-D-ribose 1-diphosphate: step 6/9. The chain is Imidazoleglycerol-phosphate dehydratase from Geobacter sulfurreducens (strain ATCC 51573 / DSM 12127 / PCA).